A 127-amino-acid polypeptide reads, in one-letter code: MKTSLCNYSEFKIYPARGMKFVRGDSKVFHFINTKVESLFFRKINPRDIRWSMVYRRIYKNTTTDVSAKKKARKTKKVERNIVGASLEVIQQKRAQKPEVKQAAAEQAKREIKEKKKAAAKKAAPKK.

The interval 93 to 127 is disordered; it reads KRAQKPEVKQAAAEQAKREIKEKKKAAAKKAAPKK. The span at 115–127 shows a compositional bias: basic residues; it reads KKKAAAKKAAPKK.

Belongs to the eukaryotic ribosomal protein eL24 family.

This Dictyostelium discoideum (Social amoeba) protein is Large ribosomal subunit protein eL24 (rpl24).